The primary structure comprises 822 residues: Nucleolar complex protein 3 (822 aa).

Disordered stretches follow at residues 1 to 86 (MGTK…DGDD), 106 to 142 (ANKR…KEQD), and 172 to 199 (KPKQ…EDSD). A compositionally biased stretch (basic residues) spans 13 to 23 (RAAHLKSKKTP). A compositionally biased stretch (basic and acidic residues) spans 35-45 (KRDQLKSKREQ). Positions 41–48 (SKREQGQN) match the Nuclear localization signal motif. Residues 76 to 86 (PLEEDNEDGDD) show a composition bias toward acidic residues. The segment covering 116 to 126 (TGENDPDQGQS) has biased composition (polar residues). Residues 181–199 (EEEEDDSEEDGDTEYEDSD) show a composition bias toward acidic residues. S187 is modified (phosphoserine). T193 is subject to Phosphothreonine. The residue at position 198 (S198) is a Phosphoserine. Residues 445 to 509 (KIKNVNLDAE…NKQAKHQKLT (65 aa)) adopt a coiled-coil conformation.

The protein belongs to the CBF/MAK21 family.

The protein localises to the nucleus. The protein resides in the nucleolus. In Drosophila melanogaster (Fruit fly), this protein is Nucleolar complex protein 3.